Consider the following 173-residue polypeptide: Endoribonuclease YbeY (173 aa).

Residues His-126, His-130, and His-136 each contribute to the Zn(2+) site.

Belongs to the endoribonuclease YbeY family. Zn(2+) is required as a cofactor.

Its subcellular location is the cytoplasm. Its function is as follows. Single strand-specific metallo-endoribonuclease involved in late-stage 70S ribosome quality control and in maturation of the 3' terminus of the 16S rRNA. The polypeptide is Endoribonuclease YbeY (Sinorhizobium fredii (strain NBRC 101917 / NGR234)).